We begin with the raw amino-acid sequence, 402 residues long: Phosphoglycerate kinase (402 aa).

Substrate contacts are provided by residues 24–26, arginine 40, 63–66, arginine 122, and arginine 155; these read DFN and HFGR. Residues lysine 206, glycine 297, glutamate 328, and 358–361 each bind ATP; that span reads GGDS.

This sequence belongs to the phosphoglycerate kinase family. Monomer.

The protein localises to the cytoplasm. It carries out the reaction (2R)-3-phosphoglycerate + ATP = (2R)-3-phospho-glyceroyl phosphate + ADP. Its pathway is carbohydrate degradation; glycolysis; pyruvate from D-glyceraldehyde 3-phosphate: step 2/5. The polypeptide is Phosphoglycerate kinase (Prochlorococcus marinus (strain AS9601)).